A 63-amino-acid chain; its full sequence is Large ribosomal subunit protein uL29 (63 aa).

Belongs to the universal ribosomal protein uL29 family.

The chain is Large ribosomal subunit protein uL29 from Pseudomonas fluorescens (strain ATCC BAA-477 / NRRL B-23932 / Pf-5).